The following is a 301-amino-acid chain: Single-stranded DNA-binding protein (301 aa).

The interval 3–7 (KRKST) is LAST. Positions 64, 77, 87, and 90 each coordinate Zn(2+). Positions 272–301 (TKTEDDFMSSSSGSSSSADDTDLDDLLNDL) are disordered. The span at 279-289 (MSSSSGSSSSA) shows a compositional bias: low complexity. Acidic residues predominate over residues 290-301 (DDTDLDDLLNDL).

Belongs to the Tequatrovirus single-stranded DNA-binding protein family. As to quaternary structure, homodimer in the absence of DNA, monomer when binding DNA. Interacts with the DNA helicase assembly protein; a ternary complex between the helicase assembly protein, the single-stranded DNA-binding protein and ssDNA is an obligatory intermediate in the helicase loading mechanism. Part of the replicase complex that includes the DNA polymerase, the polymerase clamp, the clamp loader complex, the single-stranded DNA binding protein, the primase, the DnaB-like SF4 replicative helicase and the helicase assembly factor. Interacts (via C-terminus) with the viral SF1 dDA helicase. Interacts with the viral SF2 UvsW repair helicase.

In terms of biological role, single-stranded DNA-binding protein that participates in viral DNA replication, recombination, and repair. Coats the lagging-strand ssDNA as the replication fork advances. Stimulates the activities of viral DNA polymerase and DnaB-like SF4 replicative helicase, probably via its interaction with the helicase assembly factor. Stimulates the unwinding activity of UvsW helicase, inhibits it DNA winding activity. Together with DnaB-like SF4 replicative helicase and the helicase assembly factor, promotes pairing of two homologous DNA molecules containing complementary single-stranded regions and mediates homologous DNA strand exchange. Also promotes the formation of joint molecules. mRNA specific autogenous translational repressor. The polypeptide is Single-stranded DNA-binding protein (Escherichia coli (Bacteriophage T4)).